The primary structure comprises 163 residues: Transcription antitermination protein NusB (163 aa).

The protein belongs to the NusB family.

Functionally, involved in transcription antitermination. Required for transcription of ribosomal RNA (rRNA) genes. Binds specifically to the boxA antiterminator sequence of the ribosomal RNA (rrn) operons. The sequence is that of Transcription antitermination protein NusB from Chlorobium luteolum (strain DSM 273 / BCRC 81028 / 2530) (Pelodictyon luteolum).